Consider the following 154-residue polypeptide: 6,7-dimethyl-8-ribityllumazine synthase (154 aa).

Residues phenylalanine 24, 56-58 (SFE), and 80-82 (AVV) each bind 5-amino-6-(D-ribitylamino)uracil. Position 85 to 86 (85 to 86 (ET)) interacts with (2S)-2-hydroxy-3-oxobutyl phosphate. Histidine 88 functions as the Proton donor in the catalytic mechanism. Residue phenylalanine 113 participates in 5-amino-6-(D-ribitylamino)uracil binding. Arginine 127 is a (2S)-2-hydroxy-3-oxobutyl phosphate binding site.

It belongs to the DMRL synthase family.

The enzyme catalyses (2S)-2-hydroxy-3-oxobutyl phosphate + 5-amino-6-(D-ribitylamino)uracil = 6,7-dimethyl-8-(1-D-ribityl)lumazine + phosphate + 2 H2O + H(+). Its pathway is cofactor biosynthesis; riboflavin biosynthesis; riboflavin from 2-hydroxy-3-oxobutyl phosphate and 5-amino-6-(D-ribitylamino)uracil: step 1/2. In terms of biological role, catalyzes the formation of 6,7-dimethyl-8-ribityllumazine by condensation of 5-amino-6-(D-ribitylamino)uracil with 3,4-dihydroxy-2-butanone 4-phosphate. This is the penultimate step in the biosynthesis of riboflavin. The sequence is that of 6,7-dimethyl-8-ribityllumazine synthase from Thermococcus gammatolerans (strain DSM 15229 / JCM 11827 / EJ3).